The following is a 232-amino-acid chain: MQFNFITIFPNLIKPYFDDSILSRAIKSSIIKLNFINPRDFSADKHLKVDDYMIAGGAGLLMKAQPVFDAIDSLDSTHIIYLTPAGKKFTQNDAKRLSKFENITFICGRYEGIDERIIEEKVNEVFCIGDFIMTGGELGALCMCDAITRNLNGVLGNPNSLDIESFEYGMLESPSFTKPNVYNGLSVISAFLKGNHGKINALKNNMALCKTRFFRPDLYQKLRSPKKQKEKR.

S-adenosyl-L-methionine contacts are provided by residues G108 and 128 to 133; that span reads IGDFIM.

The protein belongs to the RNA methyltransferase TrmD family. As to quaternary structure, homodimer.

The protein localises to the cytoplasm. It carries out the reaction guanosine(37) in tRNA + S-adenosyl-L-methionine = N(1)-methylguanosine(37) in tRNA + S-adenosyl-L-homocysteine + H(+). Functionally, specifically methylates guanosine-37 in various tRNAs. The chain is tRNA (guanine-N(1)-)-methyltransferase from Campylobacter fetus subsp. fetus (strain 82-40).